A 486-amino-acid chain; its full sequence is dTDP-4-dehydro-6-deoxy-alpha-D-glucopyranose 2,3-dehydratase (486 aa).

DTDP-4-dehydro-6-deoxy-alpha-D-glucose contacts are provided by residues tryptophan 66, 149–153 (TRSNY), serine 187, tryptophan 304, arginine 367, 383–385 (QCS), 388–389 (NY), and 421–424 (EGGR).

The protein belongs to the hexose 2,3-dehydratase family. Homodimer.

The catalysed reaction is dTDP-4-dehydro-6-deoxy-alpha-D-glucose = dTDP-3,4-didehydro-2,6-dideoxy-alpha-D-glucose + H2O. Its function is as follows. Involved in the biosynthesis of forosamine ((4-dimethylamino)-2,3,4,6-tetradeoxy-alpha-D-threo-hexopyranose), a highly deoxygenated sugar component of several bioactive natural products such as the insecticidal spinosyns A and D. Catalyzes the removal of the hydroxyl group at position C-2 of the hexose ring of dTDP-4-dehydro-6-deoxy-alpha-D-glucopyranose, and the oxidation of the hydroxyl group at position C-3 to form a carbonyl functionality. The product of the reaction, dTDP-2,6-dideoxy-D-glycero-hex-2-enos-4-ulose, is a highly unstable diketosugar, which spontaneously forms dTDP-3,4-didehydro-2,6-dideoxy-alpha-D-glucose. The polypeptide is dTDP-4-dehydro-6-deoxy-alpha-D-glucopyranose 2,3-dehydratase (Saccharopolyspora spinosa).